The chain runs to 547 residues: MSTDNIPTQLGIAGAVAVLLFLLRRWSSRSTLRNIPGPPPQSQWTGNLKQWFARDGADFQRDVSFNYGPVAKIHGFLGRPILYVADPKALQTILVKEEQVYQETKAFFAMTYLLFGPGLLATAGEKHRKQRKLLNPVFSIKHMRHMLPIFYGVLHKVRDAITMRVSDGPQEIDMLKWMGRTALELIGQGGLGYSFDKLVEDGDNEYGRALKHLQPTLQRINVLRRLIPYVYKLGPAWFRRMVMHYFPLGQVRDAKEIVDTMQRCSSEIFASKKIALARGDEAVMKQVGEGKDIMSILMKANSMASEADRIPEEELVAQMSTFLFAATDTTSNTLARILQQLAIHPDTQQKLREEILAANAEEYMAYDDLDALPLLDGVCRETLRVFPGVTNLARTPTQDTILPLSEPVVGTDGTVMREILVPRGTEILIGIQGSNGRKERWGEDSYEWKPERWLSPLPKTVTENPVPGVYSNLMTFMAGRRACIGFKFSEMEMKVVLAVLLSNFTFELTDKPIQWNISGVRYPTVGKDSNVAQLPLKVGLYKKPTLQ.

2 helical membrane passes run 6–23 and 106–124; these read IPTQ…LFLL and AFFA…ATAG. C483 is a binding site for heme. Residues N503 and N516 are each glycosylated (N-linked (GlcNAc...) asparagine).

The protein belongs to the cytochrome P450 family. Heme serves as cofactor.

The protein localises to the membrane. Its pathway is secondary metabolite biosynthesis. Functionally, cytochrome P450 monooxygenase that is able to use dehydroabietic acid as a substrate for oxidation. The polypeptide is Cytochrome P450 monooxygenase 81 (Postia placenta (strain ATCC 44394 / Madison 698-R) (Brown rot fungus)).